The chain runs to 140 residues: MTDYIKPYNNDPFVGHLATPINSSSLTRAYLSQLPIYRRGVSPFLRGLEIGMAHGYFLIGPFVQLGPLRNTDIKYLAGLLSAIGLIVILTLGMLLYGAVSFTNDSQDLESVDGWRQLASGFLLGAVGGAGFAYLLLTLFS.

The next 3 membrane-spanning stretches (helical) occupy residues 48 to 68, 79 to 99, and 119 to 139; these read LEIGMAHGYFLIGPFVQLGPL, LLSAIGLIVILTLGMLLYGAV, and SGFLLGAVGGAGFAYLLLTLF.

Belongs to the PsaL family.

It is found in the plastid. The protein resides in the chloroplast thylakoid membrane. In Cyanidioschyzon merolae (strain NIES-3377 / 10D) (Unicellular red alga), this protein is Photosystem I reaction center subunit XI.